The chain runs to 463 residues: MALSCTLNRYLLLMAQEHLEFRLPEIKSLLLLFGGQFASSQETYGKSPFWILSIPSEDIARNLMKRTVCAKSIFELWGHGQSPEELYSSLKNYPVEKMVPFLHSDSTYKIKIHTFNKTLTQEEKIKRIDALEFLPFEGKVNLKKPQHVFSVLEDYGLDPNCIPENPHNIYFGRWIADGQRELIESYSVKKRHFIGNTSMDAGLSFIMANHGKVKENDIVFDPFVGTGGLLIACAHFGAYVYGTDIDYNTVHGLGKATRKNQKWRGPDENIRANLRQYGLEKYYLDVLVSDASKPSWRKGTYFDAIITDPPYGIRESTRRTGSQKEIPKGIEKWEKCPESHVPVSLSYHLSDMFLDLLNFAAETLVLGGRLVYWLPVYTPEYTEEMVPWHPCLELVSNCEQKLSSHTSRRLITMEKVKKFENRDQYSHLLSDHFLPYQGHNSFREKYFSGVTKRIAKEEKSTQE.

Position 2 is an N-acetylalanine (A2).

Belongs to the class I-like SAM-binding methyltransferase superfamily. TRM11 methyltransferase family. As to quaternary structure, part of the heterodimeric TRMT11-TRM112 methyltransferase complex; this complex forms an active tRNA methyltransferase, where TRMT112 acts as an activator of the catalytic subunit TRMT11.

It localises to the cytoplasm. It carries out the reaction guanosine(10) in tRNA + S-adenosyl-L-methionine = N(2)-methylguanosine(10) in tRNA + S-adenosyl-L-homocysteine + H(+). Functionally, catalytic subunit of the TRMT11-TRM112 methyltransferase complex, that specifically mediates the S-adenosyl-L-methionine-dependent N(2)-methylation of guanosine nucleotide at position 10 (m2G10) in tRNAs. This is one of the major tRNA (guanine-N(2))-methyltransferases. This Homo sapiens (Human) protein is tRNA (guanine(10)-N(2))-methyltransferase TRMT11.